We begin with the raw amino-acid sequence, 647 residues long: MTECFLPPTSSPSEHRRAEHGSGLTRTPSSEEISPTKFPELYRTGEPSPPHDILHEPPDIVSDDEKDHGKKKGKFKKKEKRTEGYVAFQEDSSGDEAESPSKMKRSKGIHVFKKPSFSKKKEKDFKIKEKPKEEKHKEEKHKEEKHKEKKCKDFTAADVVKQWKEKKKKKKPTQEPEVPQTDAPSLRPIFGAPFADAVERTMMYDGIRLPAVFRECVDYMEKHGMKCEGIYRVSGIKSKVDELKAAYDREESPNLEEYEPNTVASLLKQYLRDLPENLLTKELMPRFEEACGRTTEVEKVQEFQRLLRELPEYNHLLLSWLIVHMDHVIAKELETKMNIQNISIVLSPTVQISNRVLYVLFTHVQELFGTVLLKQVTRPLRWSNMATMPTLPETQAGIKEEIRRQEFLLNCLHRDLQGGIKDFSKEERLWEVQRILTALKRKLREAKRQECETKIAQEIASLSKEDVSKEETNENEEVINILLAQENEILTEQEELLAMEQFLRRQIASEKEEIDRLRAEIAEIQSRQHGRSETEEYSSDSESESEDEEELQIILEDLQRQNEELEIKNNHLNQAVHEEREAIVELRVQLRLLQMLRAKSEQQLQEEEEPERRGGTGPLPCEGVLEVRAAKEQAKPSPSKDRKETPI.

Disordered stretches follow at residues 1–151 and 163–186; these read MTEC…EKKC and WKEK…APSL. T2 is modified (N-acetylthreonine). The segment covering 24–33 has biased composition (polar residues); it reads LTRTPSSEEI. S29, S30, and S34 each carry phosphoserine. At T44 the chain carries Phosphothreonine. S48 and S62 each carry phosphoserine. The segment covering 52-68 has biased composition (basic and acidic residues); the sequence is DILHEPPDIVSDDEKDH. ATP is bound at residue 69-74; the sequence is GKKKGK. The segment covering 69–79 has biased composition (basic residues); the sequence is GKKKGKFKKKE. Phosphoserine is present on residues S92 and S93. The segment covering 102-118 has biased composition (basic residues); that stretch reads KMKRSKGIHVFKKPSFS. Residues 102–119 are nuclear localization signal; sequence KMKRSKGIHVFKKPSFSK. Residues 119–151 are compositionally biased toward basic and acidic residues; it reads KKKEKDFKIKEKPKEEKHKEEKHKEEKHKEKKC. Residues 154–219 form a mediates association with membranes and could form transmembrane domains region; sequence FTAADVVKQW…PAVFRECVDY (66 aa). Residues 192 to 380 form the Rho-GAP domain; that stretch reads APFADAVERT…VLLKQVTRPL (189 aa). A mediates interaction with RALA and RALB region spans residues 403–499; it reads RRQEFLLNCL…LTEQEELLAM (97 aa). 418-425 lines the ATP pocket; sequence GGIKDFSK. Residues S461 and S463 each carry the phosphoserine modification. The interval 500–647 is mediates interaction with REPS1 and REPS2; sequence EQFLRRQIAS…PSKDRKETPI (148 aa). Disordered stretches follow at residues 525–550 and 601–647; these read QSRQ…DEEE and EQQL…ETPI. The span at 535 to 550 shows a compositional bias: acidic residues; it reads EEYSSDSESESEDEEE. Basic and acidic residues predominate over residues 628–647; it reads RAAKEQAKPSPSKDRKETPI. S637 is subject to Phosphoserine.

In terms of assembly, interacts with the GTP-bound form of RALA (via effector domain); during mitosis, recruits RALBP1 to the mitochondrion where it promotes DNM1L phosphorylation and mitochondrial fission. Interacts with DNM1L; mediates its mitotic kinase cyclin B-CDK1-mediated phosphorylation during mitosis to promote mitochondrial fission. Interacts with the mitotic kinase cyclin B-CDK1 during mitosis. Interacts with the GTP-bound form of RALB (via effector domain). Interacts with REPS1; the interaction is direct and does not affect RALA-binding nor GTPase activator activity of RALBP1. Interacts with REPS2; the interaction is direct and does not affect RALA-binding nor GTPase activator activity of RALBP1. Interacts with EPN1, NUMB and TFAP2A during interphase and mitosis. Interacts with AP2M1; as part of the AP2 complex. Interacts with CDC42. Interacts with RAC1. Post-translationally, tyrosine-phosphorylated upon stimulation of cells with EGF. In terms of processing, may undergo proteolytic cleavage to give peptides which reassemble to form a transporter complex. Ubiquitously expressed.

It localises to the cell membrane. The protein localises to the cytoplasm. The protein resides in the cytosol. It is found in the cytoskeleton. Its subcellular location is the spindle pole. It localises to the nucleus. The protein localises to the mitochondrion. It catalyses the reaction an S-substituted glutathione(in) + ATP + H2O = an S-substituted glutathione(out) + ADP + phosphate + H(+). The catalysed reaction is ATP + H2O + xenobioticSide 1 = ADP + phosphate + xenobioticSide 2.. It carries out the reaction leukotriene C4(in) + ATP + H2O = leukotriene C4(out) + ADP + phosphate + H(+). In terms of biological role, multifunctional protein that functions as a downstream effector of RALA and RALB. As a GTPase-activating protein/GAP can inactivate CDC42 and RAC1 by stimulating their GTPase activity. As part of the Ral signaling pathway, may also regulate ligand-dependent EGF and insulin receptors-mediated endocytosis. During mitosis, may act as a scaffold protein in the phosphorylation of EPSIN/EPN1 by the mitotic kinase cyclin B-CDK1, preventing endocytosis during that phase of the cell cycle. During mitosis, also controls mitochondrial fission as an effector of RALA. Recruited to mitochondrion by RALA, acts as a scaffold to foster the mitotic kinase cyclin B-CDK1-mediated phosphorylation and activation of DNM1L. Its function is as follows. Could also function as a primary ATP-dependent active transporter for glutathione conjugates of electrophiles. May also actively catalyze the efflux of a wide range of substrates including xenobiotics like doxorubicin (DOX) contributing to cell multidrug resistance. This Rattus norvegicus (Rat) protein is RalA-binding protein 1.